Reading from the N-terminus, the 363-residue chain is Protein RecA (363 aa).

ATP is bound at residue 79 to 86 (GPESSGKT).

It belongs to the RecA family.

Its subcellular location is the cytoplasm. Its function is as follows. Can catalyze the hydrolysis of ATP in the presence of single-stranded DNA, the ATP-dependent uptake of single-stranded DNA by duplex DNA, and the ATP-dependent hybridization of homologous single-stranded DNAs. It interacts with LexA causing its activation and leading to its autocatalytic cleavage. This is Protein RecA from Borrelia duttonii (strain Ly).